Reading from the N-terminus, the 115-residue chain is Protein translation factor SUI1 homolog (115 aa).

This sequence belongs to the SUI1 family.

Probably involved in translation. This chain is Protein translation factor SUI1 homolog, found in Sporobolus stapfianus (Ressurection grass).